The primary structure comprises 212 residues: Large ribosomal subunit protein uL3 (212 aa).

The interval 136 to 155 (THGNSVSHRVLGSTGQNQTP) is disordered. Position 153 is an N5-methylglutamine (glutamine 153).

It belongs to the universal ribosomal protein uL3 family. In terms of assembly, part of the 50S ribosomal subunit. Forms a cluster with proteins L14 and L19. Post-translationally, methylated by PrmB.

Functionally, one of the primary rRNA binding proteins, it binds directly near the 3'-end of the 23S rRNA, where it nucleates assembly of the 50S subunit. The sequence is that of Large ribosomal subunit protein uL3 from Acinetobacter baumannii (strain AB307-0294).